The primary structure comprises 172 residues: MHYARIVSNLHLGYDIIHMAEYVTLTTNRKAFHNYFLEEKYEAGIMLLGTEIKSLRSGRVNMGDAYVKPQRGELWLVNAHISAYECSGHTSHEPMRERKLLMHRKEIALLMSKVKEKGLTLIPVRIYLKNDIAKVELSLGRGKKLYDKRDTITKRDTERELEREVKYRNFRR.

It belongs to the SmpB family.

The protein resides in the cytoplasm. In terms of biological role, required for rescue of stalled ribosomes mediated by trans-translation. Binds to transfer-messenger RNA (tmRNA), required for stable association of tmRNA with ribosomes. tmRNA and SmpB together mimic tRNA shape, replacing the anticodon stem-loop with SmpB. tmRNA is encoded by the ssrA gene; the 2 termini fold to resemble tRNA(Ala) and it encodes a 'tag peptide', a short internal open reading frame. During trans-translation Ala-aminoacylated tmRNA acts like a tRNA, entering the A-site of stalled ribosomes, displacing the stalled mRNA. The ribosome then switches to translate the ORF on the tmRNA; the nascent peptide is terminated with the 'tag peptide' encoded by the tmRNA and targeted for degradation. The ribosome is freed to recommence translation, which seems to be the essential function of trans-translation. The sequence is that of SsrA-binding protein from Dehalococcoides mccartyi (strain ATCC BAA-2266 / KCTC 15142 / 195) (Dehalococcoides ethenogenes (strain 195)).